We begin with the raw amino-acid sequence, 913 residues long: MTDAITLPSQYDPKQTEAKWQQLWESSGVFHADPNHPGKPYCIVIPPPNVTGSLHMGHAFEHALIDVLIRYHRMIGRNVLWLPGTDHASIAVSTILDQQLQAEGTNRFALGREAYLKRAWAWKESSGKTIVGQIRRLGLSVDWSRERFTMDEGLSRAVLTAFNRLYEAGLIYRGQYLVNWCPASQSAVSDLEVENREVQGHLWYLRYPLTDGSGYLEVATTRPETMLGDTAVAVHPEDDRYRHLIGKTLRLPLMNREIPIIGDPLVDPTFGTGCVKVTPAHDPNDFVMGQRHRLPMMNLMNKDGTLNENAGEFAGLDRFVARKQVVARLEAEGFLVRVEDYKHTVPYSDRGKVPIEPLLSTQWFVKIRPLADAALKALDRQHSPRFIPDRWAKVYRDWLVNLRDWCISRQLWWGHQIPAWYVVSETNGEVRDDTPFVVAMDETAARAKAIAQFGEDIELQQDQDVLDTWFSSGLWPFSTLGWPDDTPDYRRYYPNTTLVTGFDIIFFWVARMTMMGQYFTGKIPFRDVYIHGLVRDENNKKMSKSANNGIDPLILIEKYGTDALRYSLVKEVVGAGQDIRLAYNRKTDESATVEAARNFANKLWNASRFVLLNLEGQTPGQLGTPRRQDLTASDRWILSRYHTAIQTTRERIESYGLGEAAKGLYEFIWGDFCDWYIELVKPRLQGENAKAKRTAQQVLATVLDGTLKLLHPFMPHITEEIWHTLHQVADNEVLAVQPYPKANRRAIDPDLEAQFSLLIETIRTIRNLRAEAGIKPGLYIAALIEASAEEAPIFEAGAADIQHLARLESLTIGSGLQIPQRVFSGVVGKSEVLIPLAGVVDLEALVSKLQKEGDRLRKEIQSLTARLNNPNFVNKAQPEVVAAAQAQLAAAQQQLAIIEHRLQSLGVDDKTQP.

The short motif at 48-58 (PNVTGSLHMGH) is the 'HIGH' region element. The 'KMSKS' region motif lies at 541–545 (KMSKS). K544 lines the ATP pocket. Residues 839–907 (VVDLEALVSK…IEHRLQSLGV (69 aa)) are a coiled coil.

This sequence belongs to the class-I aminoacyl-tRNA synthetase family. ValS type 1 subfamily. In terms of assembly, monomer.

It localises to the cytoplasm. The catalysed reaction is tRNA(Val) + L-valine + ATP = L-valyl-tRNA(Val) + AMP + diphosphate. Functionally, catalyzes the attachment of valine to tRNA(Val). As ValRS can inadvertently accommodate and process structurally similar amino acids such as threonine, to avoid such errors, it has a 'posttransfer' editing activity that hydrolyzes mischarged Thr-tRNA(Val) in a tRNA-dependent manner. This is Valine--tRNA ligase from Thermosynechococcus vestitus (strain NIES-2133 / IAM M-273 / BP-1).